Here is a 1022-residue protein sequence, read N- to C-terminus: Sodium/potassium-transporting ATPase subunit alpha-1 (1022 aa).

The propeptide occupies 1–5 (MGRGT). Positions 1–10 (MGRGTGHDQY) are enriched in basic and acidic residues. Residues 1–34 (MGRGTGHDQYELAATSEGGRKKKRDKKKKDMDDL) form a disordered region. At 6–86 (GHDQYELAAT…NALTPPPTTP (81 aa)) the chain is on the cytoplasmic side. S16 carries the post-translational modification Phosphoserine; by PKC. Residues 81-83 (PPP) are interaction with phosphoinositide-3 kinase. The chain crosses the membrane as a helical span at residues 87–107 (EWVKFCRQLFGGFSMLLWIGA). The Extracellular portion of the chain corresponds to 108 to 130 (ILCFLAYGIQAASEDEPANDNLY). A helical transmembrane segment spans residues 131 to 151 (LGVVLSAVVIITGCFSYYQEA). The Cytoplasmic segment spans residues 152–287 (KSSRIMDSFK…VGRTPISIEI (136 aa)). The disordered stretch occupies residues 213–234 (DNSSLTGESEPQTRSPDFSNEN). Residues 288 to 307 (EHFIHIITGVAVFLGVSFFI) traverse the membrane as a helical segment. The Extracellular segment spans residues 308-319 (LSLILGYAWLEA). Residues 320–337 (VIFLIGIIVANVPEGLLA) traverse the membrane as a helical segment. Residues 338 to 771 (TVTVCLTLTA…EEGRLIFDNL (434 aa)) lie on the Cytoplasmic side of the membrane. D375 (4-aspartylphosphate intermediate) is an active-site residue. Residue K486 coordinates ATP. Mg(2+) is bound by residues D716 and D720. The helical transmembrane segment at 772–791 (KKSIAYTLTSNIPEITPFLL) threads the bilayer. Topologically, residues 792–801 (FIIANIPLPL) are extracellular. A helical transmembrane segment spans residues 802–822 (GTVTILCIDLGTDMVPAISLA). Residues 823 to 842 (YEAAESDIMKRQPRNPRTDK) are Cytoplasmic-facing. A helical membrane pass occupies residues 843–865 (LVNERLISIAYGQIGMMQATAGF). Residues 866–917 (FTYFVILAENGFLPSTLLGIRVKWDDKYVNDLEDSYGQQWTYEQRKIVEYTC) lie on the Extracellular side of the membrane. A helical transmembrane segment spans residues 918-937 (HTSFFASIVIVQWADLIICK). At 938 to 950 (TRRNSIIQQGMKN) the chain is on the cytoplasmic side. S942 is subject to Phosphoserine; by PKA. The helical transmembrane segment at 951-969 (KILIFGLFEETALAAFLSY) threads the bilayer. Residues 970–984 (CPGMDVALRMYPLKP) lie on the Extracellular side of the membrane. A helical membrane pass occupies residues 985 to 1005 (SWWFCAFPYSLLIFLYDEARR). Over 1006 to 1022 (FILRRNPDGWVERETYY) the chain is Cytoplasmic.

The protein belongs to the cation transport ATPase (P-type) (TC 3.A.3) family. Type IIC subfamily. The sodium/potassium-transporting ATPase is composed of a catalytic alpha subunit, an auxiliary non-catalytic beta subunit and an additional regulatory subunit.

The protein resides in the cell membrane. It is found in the sarcolemma. The enzyme catalyses K(+)(out) + Na(+)(in) + ATP + H2O = K(+)(in) + Na(+)(out) + ADP + phosphate + H(+). Its function is as follows. This is the catalytic component of the active enzyme, which catalyzes the hydrolysis of ATP coupled with the exchange of sodium and potassium ions across the plasma membrane. This action creates the electrochemical gradient of sodium and potassium ions, providing the energy for active transport of various nutrients. The chain is Sodium/potassium-transporting ATPase subunit alpha-1 (atp1a1) from Anguilla anguilla (European freshwater eel).